Reading from the N-terminus, the 141-residue chain is Hemoglobin subunit alpha-D (141 aa).

The 141-residue stretch at 1–141 (MLTAEDKKLI…VAAVLAEKYR (141 aa)) folds into the Globin domain. Residues histidine 58 and histidine 87 each coordinate heme b.

This sequence belongs to the globin family. Heterotetramer of two alpha-D chains and two beta chains. As to expression, red blood cells.

Involved in oxygen transport from the lung to the various peripheral tissues. This Cairina moschata (Muscovy duck) protein is Hemoglobin subunit alpha-D (HBAD).